The primary structure comprises 145 residues: MLLPKRVKYRRVHRGNMRGKAKRGTTVHFGEFGIQAQEASWITSRQIESARIAMTRYMKRGGKVWIKIFPHKPYTKKPLEVRMGSGKGAPEGWVAVVKPGKVMFEIAGVSEEIAREALRLASHKLPVKCKFVKREENGGDTNESN.

Belongs to the universal ribosomal protein uL16 family. As to quaternary structure, part of the 50S ribosomal subunit.

Functionally, binds 23S rRNA and is also seen to make contacts with the A and possibly P site tRNAs. The sequence is that of Large ribosomal subunit protein uL16 from Exiguobacterium sibiricum (strain DSM 17290 / CCUG 55495 / CIP 109462 / JCM 13490 / 255-15).